The primary structure comprises 233 residues: Protein TIPIN homolog (233 aa).

A compositionally biased stretch (acidic residues) spans 1 to 14 (MDEMEDFFENDELD). 2 disordered regions span residues 1–39 (MDEM…RVVE) and 134–233 (GETG…NNDW). 2 stretches are compositionally biased toward basic and acidic residues: residues 163-190 (DLFK…KTAE) and 197-216 (EEYR…AKEA). Over residues 217–227 (ADEDALMEDFG) the composition is skewed to acidic residues.

It belongs to the CSM3 family.

It is found in the cytoplasm. The protein resides in the nucleus. Required for normal progression of S-phase. Important for cell survival after DNA damage or replication stress. The sequence is that of Protein TIPIN homolog from Caenorhabditis elegans.